The chain runs to 636 residues: Rust resistance kinase Lr10 (636 aa).

The signal sequence occupies residues 1-24 (MSKLLVIALLLLPLINHGIYLATA). Residues 25 to 276 (WDDQDFFKYC…MPDPHGSHIK (252 aa)) lie on the Extracellular side of the membrane. N-linked (GlcNAc...) asparagine glycans are attached at residues asparagine 56, asparagine 177, and asparagine 222. The chain crosses the membrane as a helical span at residues 277 to 297 (VIAATSSVAAFVALLLTVATV). The Cytoplasmic segment spans residues 298 to 636 (LYLSLKTRYN…FVSSENELMS (339 aa)). Residues 339 to 628 (RRFKEKVGQG…SLQMPPKPFV (290 aa)) form the Protein kinase domain. Residues 345-353 (VGQGGFGSV) and lysine 367 each bind ATP. Aspartate 466 acts as the Proton acceptor in catalysis.

The protein belongs to the protein kinase superfamily. Ser/Thr protein kinase family. Specifically expressed in the aerial parts of the plant.

The protein resides in the cell membrane. The enzyme catalyses L-seryl-[protein] + ATP = O-phospho-L-seryl-[protein] + ADP + H(+). It carries out the reaction L-threonyl-[protein] + ATP = O-phospho-L-threonyl-[protein] + ADP + H(+). The sequence is that of Rust resistance kinase Lr10 from Triticum aestivum (Wheat).